The following is a 991-amino-acid chain: Regulator of telomere elongation helicase 1 homolog (991 aa).

In terms of domain architecture, Helicase ATP-binding spans 7-319 (NGIPVNFPFE…DDLVLLKEIL (313 aa)). 42–49 (SPTGTGKT) provides a ligand contact to ATP. Residues cysteine 148, cysteine 166, cysteine 175, and cysteine 211 each coordinate [4Fe-4S] cluster. The DEAH box signature appears at 254–257 (DEAH). The segment at 812 to 833 (SMKVNPHSRSTKSAGDDAEAGG) is disordered.

This sequence belongs to the helicase family. RAD3/XPD subfamily.

The protein localises to the nucleus. The enzyme catalyses ATP + H2O = ADP + phosphate + H(+). In terms of biological role, a probable ATP-dependent DNA helicase implicated in DNA repair and the maintenance of genomic stability. Acts as an anti-recombinase to counteract toxic recombination and limit crossover during meiosis. Regulates meiotic recombination and crossover homeostasis by physically dissociating strand invasion events and thereby promotes noncrossover repair by meiotic synthesis dependent strand annealing (SDSA) as well as disassembly of D loop recombination intermediates. The protein is Regulator of telomere elongation helicase 1 homolog of Anopheles gambiae (African malaria mosquito).